The chain runs to 188 residues: FMN-dependent NADPH-azoreductase (188 aa).

It belongs to the azoreductase type 2 family. In terms of assembly, homotetramer. It depends on FMN as a cofactor.

In terms of biological role, catalyzes the reductive cleavage of azo bond in aromatic azo compounds to the corresponding amines. Requires NADPH, but not NADH, as an electron donor for its activity. In Staphylococcus saprophyticus subsp. saprophyticus (strain ATCC 15305 / DSM 20229 / NCIMB 8711 / NCTC 7292 / S-41), this protein is FMN-dependent NADPH-azoreductase (azo1).